Consider the following 263-residue polypeptide: Neurovirulence factor ICP34.5 (263 aa).

Residues 1–14 (MARRRRHRGPRRPR) are compositionally biased toward basic residues. The segment at 1–16 (MARRRRHRGPRRPRPP) is required for nucleolar localization. Disordered regions lie at residues 1-128 (MARR…PFRL) and 149-190 (RRAG…PATP). Residues 24–35 (TAQSQVTSTPNS) show a composition bias toward polar residues. The segment covering 45–58 (AAPPPPPASGPPPS) has biased composition (pro residues). Residues 73-83 (ASDDDDDDDWP) are compositionally biased toward acidic residues. Composition is skewed to pro residues over residues 84–93 (DSPPPEPAPE) and 119–128 (SHPPSRPFRL). The short motif at 128-137 (LPPRLALRLR) is the Nuclear export signal element. 10 consecutive repeat copies span residues 161–163 (ATP), 164–166 (ATP), 167–169 (ATP), 170–172 (ATP), 173–175 (ATP), 176–178 (ATP), 179–181 (ATP), 182–184 (ATP), 185–187 (ATP), and 188–190 (ATP). Positions 161–190 (ATPATPATPATPATPATPATPATPATPATP) are 10 X 3 AA tandem repeats of A-T-P. Residues 164–190 (ATPATPATPATPATPATPATPATPATP) are compositionally biased toward low complexity. An interaction with host PPP1CA region spans residues 190 to 203 (PARVRFSPHVRVRH). The important for interferon resistance stretch occupies residues 205-263 (VVWASAARLARRGSWARERADRARFRRRVAEAEAVIGPCLGPEARARALARGAGPANSV). The short motif at 215-233 (RRGSWARERADRARFRRRV) is the Bipartite nuclear localization signal element. The interaction with host EIF2S1/EIF-2ALPHA stretch occupies residues 233–248 (VAEAEAVIGPCLGPEA).

Belongs to the PPP1R15 family. Interacts with host PPP1CA; this interaction to forms a high-molecular-weight complex that dephosphorylates EIF2S1/eIF-2alpha. Interacts with host EIF2S1/eIF-2alpha; this interaction is crucial for the specific dephosphorylation of EIF2S1/eIF-2alpha by PPP1CA. Binds to proliferating cell nuclear antigen (PCNA), which may release host cells from growth arrest and facilitate viral replication. Interacts (via N-terminus) with host C1QBP; this interaction allows C1QBP to be recruited to the inner nuclear membrane by ICP34.5. Interacts with host PRKCA. Interacts with protein UL31. Interacts with host STING/TMEM173; this interaction inhibits the intracellular DNA sensing pathway. Interacts with host BECN1; this interaction modulates host autophagy.

Its subcellular location is the host cytoplasm. The protein resides in the host nucleus. It localises to the host nucleolus. The protein localises to the virion. Its function is as follows. Inhibits the establishment of the immune response and of the integrated stress response (ISR) in the infected cell. Plays essential roles in viral nuclear egress to mediate capsid transit across the nuclear membrane. Facilitates nuclear egress cooperatively with host C1QBP and protein kinase C/PKC to induce lamin A/C phosphorylation and subsequent reorganization. In turn, lamina disassembles and nuclear egress occurs. Recruits the serine/threonine protein phosphatase PPP1CA/PP1-alpha to dephosphorylate the translation initiation factor EIF2S1/eIF-2alpha, thereby couteracting the host shutoff of protein synthesis involving double-stranded RNA-dependent protein kinase EIF2AK2/PKR. In turn, controls host IRF3 activation and subsequently inhibits host interferon response. Controls the DNA sensing pathway by interacting with and inhibiting host STING/TMEM173. Also down-modulates the host MHC class II proteins cell surface expression. Acts as a neurovirulence factor that has a profound effect on the growth of the virus in central nervous system tissue, by interacting with host BECN1 and thereby antagonizing the host autophagy response. The sequence is that of Neurovirulence factor ICP34.5 (RL1) from Human herpesvirus 1 (strain F) (HHV-1).